A 314-amino-acid chain; its full sequence is E3 ubiquitin-protein ligase CHIP (314 aa).

Residues 1 to 11 (MKGKEEREREG) are compositionally biased toward basic and acidic residues. Residues 1–47 (MKGKEEREREGGGGAVGPGAAGPGAGGGSPEKSHSAQEHKEQGNRLF) form a disordered region. Residues 12 to 29 (GGGAVGPGAAGPGAGGGS) show a composition bias toward gly residues. Residues 31–43 (EKSHSAQEHKEQG) are compositionally biased toward basic and acidic residues. TPR repeat units follow at residues 36 to 69 (AQEHKEQGNRLFGGRKYPEAAAAYGRAINRNPLV), 70 to 103 (AVYYTNRALCYLKMQQHDKALADCKRALELDGQS), and 105 to 137 (KAHFFLGQCQMEMENYDEAIANLQRAYNLAKEQ). Residues 237 to 311 (DIPDYLCGKI…DAFISENGWV (75 aa)) form the U-box domain.

In terms of assembly, homodimer.

The protein localises to the cytoplasm. Its subcellular location is the nucleus. It localises to the mitochondrion. It catalyses the reaction S-ubiquitinyl-[E2 ubiquitin-conjugating enzyme]-L-cysteine + [acceptor protein]-L-lysine = [E2 ubiquitin-conjugating enzyme]-L-cysteine + N(6)-ubiquitinyl-[acceptor protein]-L-lysine.. Functionally, E3 ubiquitin-protein ligase which targets misfolded chaperone substrates towards proteasomal degradation. Collaborates with ATXN3 in the degradation of misfolded chaperone substrates: ATXN3 restricting the length of ubiquitin chain attached to STUB1/CHIP substrates and preventing further chain extension. The sequence is that of E3 ubiquitin-protein ligase CHIP from Gallus gallus (Chicken).